Reading from the N-terminus, the 106-residue chain is Iron-sulfur cluster assembly protein CyaY (106 aa).

Belongs to the frataxin family.

Functionally, involved in iron-sulfur (Fe-S) cluster assembly. May act as a regulator of Fe-S biogenesis. This is Iron-sulfur cluster assembly protein CyaY from Photorhabdus laumondii subsp. laumondii (strain DSM 15139 / CIP 105565 / TT01) (Photorhabdus luminescens subsp. laumondii).